We begin with the raw amino-acid sequence, 293 residues long: Undecaprenyl-diphosphatase (293 aa).

8 helical membrane-spanning segments follow: residues 3–23 (IALA…EFLP), 43–63 (KGKI…CWEF), 85–105 (ANVV…GKWI), 109–129 (LFNP…ILLA), 178–198 (FALV…MLFG), 203–223 (VATE…TVYE), 238–258 (IFAV…RWLL), and 269–289 (FAWY…SGLV).

This sequence belongs to the UppP family.

The protein resides in the cell inner membrane. It carries out the reaction di-trans,octa-cis-undecaprenyl diphosphate + H2O = di-trans,octa-cis-undecaprenyl phosphate + phosphate + H(+). Its function is as follows. Catalyzes the dephosphorylation of undecaprenyl diphosphate (UPP). Confers resistance to bacitracin. The sequence is that of Undecaprenyl-diphosphatase from Cupriavidus necator (strain ATCC 17699 / DSM 428 / KCTC 22496 / NCIMB 10442 / H16 / Stanier 337) (Ralstonia eutropha).